We begin with the raw amino-acid sequence, 563 residues long: Pyruvate decarboxylase isozyme 3 (563 aa).

N-acetylserine is present on Ser-2. Asp-28 and His-115 together coordinate pyruvate. Residue Lys-212 forms a Glycyl lysine isopeptide (Lys-Gly) (interchain with G-Cter in ubiquitin) linkage. A Phosphoserine modification is found at Ser-223. Lys-233 is covalently cross-linked (Glycyl lysine isopeptide (Lys-Gly) (interchain with G-Cter in ubiquitin)). Position 266 is a phosphothreonine (Thr-266). Lys-269 participates in a covalent cross-link: Glycyl lysine isopeptide (Lys-Gly) (interchain with G-Cter in ubiquitin). A Phosphothreonine modification is found at Thr-353. Thiamine diphosphate-binding positions include Thr-390 and 413–415 (GSI). A Mg(2+)-binding site is contributed by Asp-444. Residues 445 to 446 (GS) and 471 to 476 (NDGYTI) each bind thiamine diphosphate. The Mg(2+) site is built by Asn-471 and Gly-473. Glu-477 is a binding site for pyruvate. Lys-505 participates in a covalent cross-link: Glycyl lysine isopeptide (Lys-Gly) (interchain with G-Cter in ubiquitin). Thr-522 carries the post-translational modification Phosphothreonine.

Belongs to the TPP enzyme family. As to quaternary structure, homotetramer. Mg(2+) is required as a cofactor. Thiamine diphosphate serves as cofactor.

It localises to the cytoplasm. It carries out the reaction pyruvate + H(+) = acetaldehyde + CO2. The enzyme catalyses 3-methyl-2-oxobutanoate + H(+) = 2-methylpropanal + CO2. The catalysed reaction is (S)-3-methyl-2-oxopentanoate + H(+) = 2-methylbutanal + CO2. It catalyses the reaction indole-3-pyruvate + H(+) = indole-3-acetaldehyde + CO2. It carries out the reaction 3-phenylpyruvate + H(+) = 2-phenylacetaldehyde + CO2. The enzyme catalyses 2-oxobutanoate + H(+) = propanal + CO2. The catalysed reaction is 2-oxopentanoate + H(+) = butanal + CO2. It catalyses the reaction 2 acetaldehyde = acetoin. It carries out the reaction acetaldehyde + pyruvate + H(+) = acetoin + CO2. It functions in the pathway fermentation; ethanol fermentation. Its pathway is amino-acid degradation; Ehrlich pathway. In terms of biological role, minor of three pyruvate decarboxylases (PDC1, PDC5, PDC6) implicated in the nonoxidative conversion of pyruvate to acetaldehyde and carbon dioxide during alcoholic fermentation. Most of the produced acetaldehyde is subsequently reduced to ethanol, but some is required for cytosolic acetyl-CoA production for biosynthetic pathways. The enzyme is also one of five 2-oxo acid decarboxylases (PDC1, PDC5, PDC6, ARO10, and THI3) able to decarboxylate more complex 2-oxo acids (alpha-keto-acids) than pyruvate, which seem mainly involved in amino acid catabolism. Here the enzyme catalyzes the decarboxylation of amino acids, which, in a first step, have been transaminated to the corresponding 2-oxo acids. In a third step, the resulting aldehydes are reduced to alcohols, collectively referred to as fusel oils or alcohols. Its preferred substrates are the transaminated amino acids derived from threonine (2-oxobutanoate), norvaline (2-oxopentanoate), valine (3-methyl-2-oxobutanoate, also alpha-keto-isovalerate), isoleucine ((3S)-3-methyl-2-oxopentanoate, also alpha-keto-beta-methylvalerate), phenylalanine (phenylpyruvate), and tryptophan (3-(indol-3-yl)pyruvate), whereas transaminated leucine is no substrate. In a side-reaction the carbanionic intermediate (or active aldehyde) generated by decarboxylation or by activation of an aldehyde can react with an aldehyde via condensation (or carboligation) yielding a 2-hydroxy ketone, collectively called acyloins. The expression level of this protein in the presence of fermentable carbon sources is so low that it cannot compensate for the other two pyruvate decarboxylases to sustain fermentation. The protein is Pyruvate decarboxylase isozyme 3 (PDC6) of Saccharomyces cerevisiae (strain ATCC 204508 / S288c) (Baker's yeast).